The chain runs to 1040 residues: Eukaryotic translation initiation factor 3 subunit A (1040 aa).

Residues 92–121 (LKKFIELAEKKVTEAQTKADEIQSSLESAA) adopt a coiled-coil conformation. The 185-residue stretch at 339–523 (MTKAASFVLL…GVLTFDSDVF (185 aa)) folds into the PCI domain. A coiled-coil region spans residues 608–906 (RVIIEKKKEA…AEARRAARKA (299 aa)). Composition is skewed to basic and acidic residues over residues 617 to 632 (AATD…EETR) and 795 to 901 (EVSE…EARR). Disordered regions lie at residues 617 to 641 (AATD…QQLQ) and 795 to 1040 (EVSE…QQNQ). Composition is skewed to low complexity over residues 908–917 (LEPAAPAARP), 945–955 (KEAAGGAAPEA), 978–993 (SGSS…NGAP), and 1004–1018 (SSSS…TPGS).

Belongs to the eIF-3 subunit A family. Component of the eukaryotic translation initiation factor 3 (eIF-3) complex.

The protein resides in the cytoplasm. Its function is as follows. RNA-binding component of the eukaryotic translation initiation factor 3 (eIF-3) complex, which is involved in protein synthesis of a specialized repertoire of mRNAs and, together with other initiation factors, stimulates binding of mRNA and methionyl-tRNAi to the 40S ribosome. The eIF-3 complex specifically targets and initiates translation of a subset of mRNAs involved in cell proliferation. In Aspergillus terreus (strain NIH 2624 / FGSC A1156), this protein is Eukaryotic translation initiation factor 3 subunit A (tif32).